Consider the following 168-residue polypeptide: MADYYNVGKVTSPHGIRGEIKVYPLTNVPERFYDIPYIWVFDEKDIPCKYEIENVKITSKGMVLLKLKGIDSRNDAEKLKGLFLKVDAENALKLEEDEYFITDLIGMKVYTEEGELIGTLEEVLQTGANDVYVVKAKEREVLLPAIKEVIKKVDVEGKVMIVRLLEGL.

One can recognise a PRC barrel domain in the interval 96 to 168 (EDEYFITDLI…VMIVRLLEGL (73 aa)).

This sequence belongs to the RimM family. In terms of assembly, binds ribosomal protein uS19.

It localises to the cytoplasm. An accessory protein needed during the final step in the assembly of 30S ribosomal subunit, possibly for assembly of the head region. Essential for efficient processing of 16S rRNA. May be needed both before and after RbfA during the maturation of 16S rRNA. It has affinity for free ribosomal 30S subunits but not for 70S ribosomes. In Caldanaerobacter subterraneus subsp. tengcongensis (strain DSM 15242 / JCM 11007 / NBRC 100824 / MB4) (Thermoanaerobacter tengcongensis), this protein is Ribosome maturation factor RimM.